A 625-amino-acid polypeptide reads, in one-letter code: Autophagy-related protein 13b (625 aa).

2 stretches are compositionally biased toward low complexity: residues 322–332 (PSVSCSPSPTR) and 455–477 (PSGV…SSRS). 3 disordered regions span residues 322 to 388 (PSVS…AVPR), 452 to 527 (FRRP…YPKK), and 544 to 564 (PPLR…NNNK). Residues 498-518 (ITDRNSRPGSFDHRGDIHEPF) show a composition bias toward basic and acidic residues.

It belongs to the ATG13 family. Plant subfamily.

It is found in the cytoplasmic vesicle. Its subcellular location is the autophagosome. Its function is as follows. Involved in autophagy in a nutritional condition dependent manner. The ATG1-ATG13 protein kinase complex regulates downstream events required for autophagosome enclosure and/or vacuolar delivery. Becomes a target of autophagy under nutrient starvation. Connects autophagy to plant nutritional status. This is Autophagy-related protein 13b from Arabidopsis thaliana (Mouse-ear cress).